The sequence spans 499 residues: Glutamate--tRNA ligase (499 aa).

A 'HIGH' region motif is present at residues 12 to 22 (PSPTGHLHIGN). The 'KMSKS' region motif lies at 259–263 (KLSKR). K262 is a binding site for ATP.

Belongs to the class-I aminoacyl-tRNA synthetase family. Glutamate--tRNA ligase type 1 subfamily. As to quaternary structure, monomer.

Its subcellular location is the cytoplasm. It carries out the reaction tRNA(Glu) + L-glutamate + ATP = L-glutamyl-tRNA(Glu) + AMP + diphosphate. In terms of biological role, catalyzes the attachment of glutamate to tRNA(Glu) in a two-step reaction: glutamate is first activated by ATP to form Glu-AMP and then transferred to the acceptor end of tRNA(Glu). This Lactobacillus johnsonii (strain CNCM I-12250 / La1 / NCC 533) protein is Glutamate--tRNA ligase.